An 89-amino-acid chain; its full sequence is Small ribosomal subunit protein uS15 (89 aa).

Belongs to the universal ribosomal protein uS15 family. In terms of assembly, part of the 30S ribosomal subunit. Forms a bridge to the 50S subunit in the 70S ribosome, contacting the 23S rRNA.

In terms of biological role, one of the primary rRNA binding proteins, it binds directly to 16S rRNA where it helps nucleate assembly of the platform of the 30S subunit by binding and bridging several RNA helices of the 16S rRNA. Its function is as follows. Forms an intersubunit bridge (bridge B4) with the 23S rRNA of the 50S subunit in the ribosome. In Chlorobium phaeobacteroides (strain BS1), this protein is Small ribosomal subunit protein uS15.